We begin with the raw amino-acid sequence, 104 residues long: Large ribosomal subunit protein uL24 (104 aa).

It belongs to the universal ribosomal protein uL24 family. Part of the 50S ribosomal subunit.

Functionally, one of two assembly initiator proteins, it binds directly to the 5'-end of the 23S rRNA, where it nucleates assembly of the 50S subunit. Its function is as follows. One of the proteins that surrounds the polypeptide exit tunnel on the outside of the subunit. The polypeptide is Large ribosomal subunit protein uL24 (Clostridium perfringens (strain ATCC 13124 / DSM 756 / JCM 1290 / NCIMB 6125 / NCTC 8237 / Type A)).